A 455-amino-acid polypeptide reads, in one-letter code: MQAATETIAAIATAPGRGGVGIVRVSGPLAGRIAVEVSGRELKPRHAHYGPFLDGGGQVIDEGLSLYFPGPNSFTGEDVLELQGHGGPVVLDLLVQRCLELGARQARPGEFSERAFLNDKLDLAQAEAIADLIEASSEQAARNALRSLQGEFSRRVHALTEQLISLRIYVEAAIDFPEEEIDFLADGHVLGLLEKVRTELSTVRREASQGALLRDGMTVVIAGRPNAGKSSLLNALAGREAAIVTDIAGTTRDVLREHIHIDGMPLHVVDTAGLRDTEDHVEKIGVERALKAIGEADRVLLVVDATAPEAADPFSLWPEFLDQRPEPGKVTLIRNKADLSTEAIGLEESADGHVTITLSARTNAGLELLREHLKACMGFEQTAESGFSARRRHLEALRLAGNALEHGHAQLIHNGAGELLAEDLRQAQQHLGEITGAFTPDDLLGRIFSSFCIGK.

(6S)-5-formyl-5,6,7,8-tetrahydrofolate contacts are provided by Arg-24, Glu-81, and Lys-120. Positions 216–378 constitute a TrmE-type G domain; that stretch reads GMTVVIAGRP…LREHLKACMG (163 aa). A K(+)-binding site is contributed by Asn-226. Residues 226-231, 245-251, 270-273, 335-338, and 359-361 each bind GTP; these read NAGKSS, TDIAGTT, DTAG, NKAD, and SAR. Ser-230 lines the Mg(2+) pocket. K(+) is bound by residues Thr-245, Ile-247, and Thr-250. Position 251 (Thr-251) interacts with Mg(2+). Lys-455 contributes to the (6S)-5-formyl-5,6,7,8-tetrahydrofolate binding site.

Belongs to the TRAFAC class TrmE-Era-EngA-EngB-Septin-like GTPase superfamily. TrmE GTPase family. In terms of assembly, homodimer. Heterotetramer of two MnmE and two MnmG subunits. The cofactor is K(+).

Its subcellular location is the cytoplasm. In terms of biological role, exhibits a very high intrinsic GTPase hydrolysis rate. Involved in the addition of a carboxymethylaminomethyl (cmnm) group at the wobble position (U34) of certain tRNAs, forming tRNA-cmnm(5)s(2)U34. In Pseudomonas paraeruginosa (strain DSM 24068 / PA7) (Pseudomonas aeruginosa (strain PA7)), this protein is tRNA modification GTPase MnmE.